The following is a 115-amino-acid chain: Probable non-functional T cell receptor beta variable 7-3 (115 aa).

A signal peptide spans 1–21 (MGTRLLCWAALCLLGADHTGA). Residues 22–115 (GVSQTPSNKV…SAAYLRASSL (94 aa)) form the Ig-like domain.

In terms of assembly, most probably, the alpha-beta TR is not assembled due to incorrect folding of the beta chain. Alpha-beta TR is a heterodimer composed of an alpha and beta chain; disulfide-linked. The alpha-beta TR is associated with the transmembrane signaling CD3 coreceptor proteins to form the TR-CD3 (TcR or TCR). The assembly of alpha-beta TR heterodimers with CD3 occurs in the endoplasmic reticulum where a single alpha-beta TR heterodimer associates with one CD3D-CD3E heterodimer, one CD3G-CD3E heterodimer and one CD247 homodimer forming a stable octameric structure. CD3D-CD3E and CD3G-CD3E heterodimers preferentially associate with TR alpha and TR beta chains, respectively. The association of the CD247 homodimer is the last step of TcR assembly in the endoplasmic reticulum and is required for transport to the cell surface.

Its subcellular location is the cell membrane. Probable non-functional open reading frame (ORF) of V region of the variable domain of T cell receptor (TR) beta chain. Non-functional ORF generally cannot participate in the synthesis of a productive T cell receptor (TR) chain due to altered V-(D)-J or switch recombination and/or splicing site (at mRNA level) and/or conserved amino acid change (protein level). Alpha-beta T cell receptors are antigen specific receptors which are essential to the immune response and are present on the cell surface of T lymphocytes. Recognize peptide-major histocompatibility (MH) (pMH) complexes that are displayed by antigen presenting cells (APC), a prerequisite for efficient T cell adaptive immunity against pathogens. Binding of alpha-beta TR to pMH complex initiates TR-CD3 clustering on the cell surface and intracellular activation of LCK that phosphorylates the ITAM motifs of CD3G, CD3D, CD3E and CD247 enabling the recruitment of ZAP70. In turn ZAP70 phosphorylates LAT, which recruits numerous signaling molecules to form the LAT signalosome. The LAT signalosome propagates signal branching to three major signaling pathways, the calcium, the mitogen-activated protein kinase (MAPK) kinase and the nuclear factor NF-kappa-B (NF-kB) pathways, leading to the mobilization of transcription factors that are critical for gene expression and essential for T cell growth and differentiation. The T cell repertoire is generated in the thymus, by V-(D)-J rearrangement. This repertoire is then shaped by intrathymic selection events to generate a peripheral T cell pool of self-MH restricted, non-autoaggressive T cells. Post-thymic interaction of alpha-beta TR with the pMH complexes shapes TR structural and functional avidity. The protein is Probable non-functional T cell receptor beta variable 7-3 of Homo sapiens (Human).